The chain runs to 418 residues: Deubiquitinase and deneddylase Dub1 (418 aa).

The segment covering 1 to 11 has biased composition (polar residues); the sequence is MLSPTNSTSKT. A disordered region spans residues 1 to 23; it reads MLSPTNSTSKTAPVPPQDSSKPV. The chain crosses the membrane as a helical span at residues 40 to 60; the sequence is TALVVLLVVVTLGLILLFYSF. The disordered stretch occupies residues 72–145; the sequence is TRPSTKEQPT…LPPKAPKPVK (74 aa). A compositionally biased stretch (pro residues) spans 86–141; the sequence is VPLPSPPLAVPRPSTPPPPVISRPSMPPAPTPAISPPSTPSAPKPSTPPPLPPKAP. Active-site residues include His288, Asp305, and Cys358.

The protein belongs to the peptidase C48 family.

The protein localises to the secreted. It localises to the host cell. The protein resides in the membrane. Effector proteins function to alter host cell physiology and promote bacterial survival in host tissues. This protease possesses deubiquitinating and deneddylating activities. This Chlamydia trachomatis serovar E (strain Sweden2) protein is Deubiquitinase and deneddylase Dub1 (cdu1).